The following is a 263-amino-acid chain: MLKINNDTKLFGVLGENIPYTLSPAIHNYAFQRLGINAVYLRFDVRRDKFHSIIIGLLNIASGLNVTIPYKEDVVKYLYGVSEEARVIGAVNTIHNLNGYNTDYIAIYNLIKEKLIDKPSICTVFGAGGAGRASIYALLKLGCEVYVINRSLERAQSLEKDFKEFGYDIKIISSCKPGDIIVNATPNSSYVPDECIKGKLVVDLVYNPVKTPLILKAEKTGIRSINGLEILVRQAMEAERIWFGKSLSDEEVVKFLYARKLVR.

Residues 21 to 23 (TLS) and T67 each bind shikimate. The Proton acceptor role is filled by K71. Residue E83 coordinates NADP(+). Shikimate-binding residues include N92 and D103. NADP(+) contacts are provided by residues 126-130 (GAGGA) and L204. Y206 provides a ligand contact to shikimate. NADP(+) is bound at residue G227.

Belongs to the shikimate dehydrogenase family. As to quaternary structure, homodimer.

It carries out the reaction shikimate + NADP(+) = 3-dehydroshikimate + NADPH + H(+). The protein operates within metabolic intermediate biosynthesis; chorismate biosynthesis; chorismate from D-erythrose 4-phosphate and phosphoenolpyruvate: step 4/7. In terms of biological role, involved in the biosynthesis of the chorismate, which leads to the biosynthesis of aromatic amino acids. Catalyzes the reversible NADPH linked reduction of 3-dehydroshikimate (DHSA) to yield shikimate (SA). In Sulfolobus acidocaldarius (strain ATCC 33909 / DSM 639 / JCM 8929 / NBRC 15157 / NCIMB 11770), this protein is Shikimate dehydrogenase (NADP(+)).